A 233-amino-acid polypeptide reads, in one-letter code: MAKLTKRMRNIREKVDVVKQYEINEAVALLKELATAKFVESVDVAVNLGIDARKSDQNVRGATVLPHGTGRSVRVAVFAQGANAEAAKEAGAELVGMDDLAAKVKAGEMDFDVVIASPDAMRVVGQLGQILGPRGLMPNPKVGTVTPNVAEAVKNAKAGQVRYRNDKNGIIHTTIGKVDFNEAQLKENLEALLVALKKAKPSSAKGVYIKKVSLSTTMGAGVAIDQASLSATV.

It belongs to the universal ribosomal protein uL1 family. Part of the 50S ribosomal subunit.

Functionally, binds directly to 23S rRNA. The L1 stalk is quite mobile in the ribosome, and is involved in E site tRNA release. In terms of biological role, protein L1 is also a translational repressor protein, it controls the translation of the L11 operon by binding to its mRNA. In Proteus mirabilis (strain HI4320), this protein is Large ribosomal subunit protein uL1.